Here is a 318-residue protein sequence, read N- to C-terminus: uncharacterized protein (318 aa).

The protein to A.aeolicus AA07 and AA34.

This is an uncharacterized protein from Aquifex aeolicus (strain VF5).